The chain runs to 263 residues: Putative protein JayE (263 aa).

It belongs to the Mu gp47/PBSX XkdT family.

The polypeptide is Putative protein JayE (jayE) (Escherichia coli (strain K12)).